Consider the following 509-residue polypeptide: Ribonuclease E/G-like protein (509 aa).

Positions 35-117 (SDIYLGCVDK…LTANITLSGR (83 aa)) constitute an S1 motif domain. Positions 296 and 339 each coordinate Mg(2+).

Belongs to the RNase E/G family. Requires Mg(2+) as cofactor.

It localises to the plastid. It is found in the chloroplast stroma. In terms of biological role, involved in intercistronic processing of primary transcripts from chloroplast operons. The endonucleolytic activity of the enzyme depends on the number of phosphates at the 5' end, is inhibited by structured RNA, and preferentially cleaves A/U-rich sequences. In Pyropia yezoensis (Susabi-nori), this protein is Ribonuclease E/G-like protein (rne).